Reading from the N-terminus, the 689-residue chain is FACT complex subunit ssrp1-B (689 aa).

Disordered regions lie at residues 434-565 and 592-689; these read DNKS…KRAT and KAGA…GESD. Over residues 461-477 the composition is skewed to acidic residues; that stretch reads EQDDDSDDESTDEDYDL. 4 stretches are compositionally biased toward basic and acidic residues: residues 478 to 491, 523 to 532, 538 to 563, and 601 to 628; these read DKDM…KDSS, IEPKKKESKE, EKKE…EPKR, and SADD…EYKK. Positions 561–627 form a DNA-binding region, HMG box; that stretch reads PKRATTAYII…RYEAEMKEYK (67 aa). Polar residues predominate over residues 638 to 650; it reads GPSTKKSSDQSPG.

The protein belongs to the SSRP1 family. In terms of assembly, component of the FACT complex, a stable heterodimer of hmg-3 and spt-16. The FACT complex may also include hmg-4 instead of hmg-3. As to expression, expressed in the germline.

The protein resides in the nucleus. It is found in the chromosome. Component of the FACT complex, a general chromatin factor that acts to reorganize nucleosomes. The FACT complex is involved in multiple processes that require DNA as a template such as mRNA elongation, DNA replication and DNA repair. During transcription elongation the FACT complex acts as a histone chaperone that both destabilizes and restores nucleosomal structure. It facilitates the passage of RNA polymerase II and transcription by promoting the dissociation of one histone H2A-H2B dimer from the nucleosome, then subsequently promotes the reestablishment of the nucleosome following the passage of RNA polymerase II. Binds specifically to double-stranded DNA. In embryos, may function redundantly with hmg-4 to promote cell cycle progression and development of the anterior pharynx. In the germline, acts non-redundantly with hmg-4 to play a role in oocyte development. The polypeptide is FACT complex subunit ssrp1-B (Caenorhabditis elegans).